Consider the following 190-residue polypeptide: Dynactin subunit 6 (190 aa).

The residue at position 186 (Thr186) is a Phosphothreonine; by CDK1.

The protein belongs to the dynactin subunits 5/6 family. Dynactin subunit 6 subfamily. As to quaternary structure, subunit of dynactin, a multiprotein complex part of a tripartite complex with dynein and a adapter, such as BICDL1, BICD2 or HOOK3. The dynactin complex is built around ACTR1A/ACTB filament and consists of an actin-related filament composed of a shoulder domain, a pointed end and a barbed end. Its length is defined by its flexible shoulder domain. The soulder is composed of 2 DCTN1 subunits, 4 DCTN2 and 2 DCTN3. The 4 DCNT2 (via N-terminus) bind the ACTR1A filament and act as molecular rulers to determine the length. The pointed end is important for binding dynein-dynactin cargo adapters. Consists of 4 subunits: ACTR10, DCNT4, DCTN5 and DCTN6. Within the complex DCTN6 forms a heterodimer with DCTN5. The barbed end is composed of a CAPZA1:CAPZB heterodimers, which binds ACTR1A/ACTB filament and dynactin and stabilizes dynactin. Interacts with PLK1. Interacts with N4BP2L1. Phosphorylation at Thr-186 by CDK1 during mitotic prometaphase creates a binding site for PLK1 that facilitates its recruitment to kinetochores.

It localises to the cytoplasm. The protein resides in the cytoskeleton. The protein localises to the chromosome. Its subcellular location is the centromere. It is found in the kinetochore. Part of the dynactin complex that activates the molecular motor dynein for ultra-processive transport along microtubules. This chain is Dynactin subunit 6 (DCTN6), found in Bos taurus (Bovine).